The chain runs to 392 residues: GDSL esterase/lipase ESM1 (392 aa).

The N-terminal stretch at 1–28 is a signal peptide; the sequence is MADNLNLVSVLGVLLVLTIFHNPIIVYA. The active-site Nucleophile is Ser-43. 3 N-linked (GlcNAc...) asparagine glycosylation sites follow: Asn-146, Asn-166, and Asn-290. Residues Asp-324 and His-327 contribute to the active site.

This sequence belongs to the 'GDSL' lipolytic enzyme family.

Its subcellular location is the secreted. In terms of biological role, represses or inhibits nitriles production from methionine-derived and from indol-3-ylmethyl glucosinolates. Favors isothiocyanate production. The protein is GDSL esterase/lipase ESM1 (ESM1) of Arabidopsis thaliana (Mouse-ear cress).